The primary structure comprises 124 residues: Pal-related lipoprotein (124 aa).

Positions 1–18 are cleaved as a signal peptide; it reads MRYRAVFPMLIIVFALSG. Cys19 is lipidated: N-palmitoyl cysteine. Cys19 carries S-diacylglycerol cysteine lipidation.

The protein localises to the cell membrane. The polypeptide is Pal-related lipoprotein (slp) (Bacillus subtilis (strain 168)).